The chain runs to 266 residues: Zinc transporter ZupT (266 aa).

The next 8 helical transmembrane spans lie at 8-28 (LLLT…ALAV), 36-56 (LALS…MEII), 71-91 (AGAW…WAID), 123-143 (GIFT…AVFF), 152-172 (GIVI…AVAV), 185-205 (FSLS…GYTL), 209-229 (FLTP…MVYI), and 246-266 (LAIT…LLLT). Fe(2+) is bound by residues N134 and E137. Residues E137 and H162 each coordinate Zn(2+). Residues N163, E166, and E195 each coordinate Fe(2+). Zn(2+) is bound at residue E166.

Belongs to the ZIP transporter (TC 2.A.5) family. ZupT subfamily.

The protein localises to the cell inner membrane. The enzyme catalyses Zn(2+)(in) = Zn(2+)(out). In terms of biological role, mediates zinc uptake. May also transport other divalent cations. The polypeptide is Zinc transporter ZupT (Chlorobium luteolum (strain DSM 273 / BCRC 81028 / 2530) (Pelodictyon luteolum)).